The primary structure comprises 105 residues: Putative membrane protein insertion efficiency factor (105 aa).

It belongs to the UPF0161 family.

The protein resides in the cell inner membrane. Could be involved in insertion of integral membrane proteins into the membrane. In Nitratidesulfovibrio vulgaris (strain DSM 19637 / Miyazaki F) (Desulfovibrio vulgaris), this protein is Putative membrane protein insertion efficiency factor.